Reading from the N-terminus, the 45-residue chain is Putative purine permease 9 (45 aa).

As to expression, not detected in seedlings, leaves, embryos or root and shoot meristems.

This is Putative purine permease 9 from Arabidopsis thaliana (Mouse-ear cress).